The following is a 265-amino-acid chain: Polyglutamine-binding protein 1 (265 aa).

In terms of domain architecture, WW spans 46 to 80 (EGLPPSWYKVFDPSCGLPYYWNADTDLVSWLSPHD). Position 94 is a phosphoserine (Ser94). The segment at 94–265 (SSNADAEEKL…AEASRTKQQD (172 aa)) is disordered. Basic and acidic residues predominate over residues 99–175 (AEEKLDRSHD…DKADREEGKE (77 aa)). Repeat copies occupy residues 104-110 (DRSHDKS), 111-117 (DRGHDKS), 118-124 (DRSHEKP), 125-131 (DRGHDKS), 132-138 (DRGHDKS), 139-140 (DR), 141-142 (DR), 143-144 (ER), 150-151 (DR), 152-153 (ER), 154-155 (ER), 156-157 (DR), 158-159 (ER), 160-161 (DR), and 162-163 (DR). The 5 X 7 AA approximate tandem repeats of D-R-[SG]-H-D-K-S stretch occupies residues 104–138 (DRSHDKSDRGHDKSDRSHEKPDRGHDKSDRGHDKS). Residues 139–144 (DRDRER) are 3 X 2 AA tandem repeats of [DE]-R. A 7 X 2 AA tandem repeats of [DE]-R region spans residues 150-163 (DRERERDRERDRDR). The tract at residues 245–255 (YPSPGAVLRAN) is important for interaction with TXNL4A. Phosphoserine is present on Ser247.

In terms of assembly, interacts with POU3F2/Brn-2, ATXN1, TXNL4A, HTT and AR. Interaction with ATXN1 correlates positively with the length of the polyglutamine tract. Interacts with RNA polymerase II large subunit in a phosphorylation-dependent manner. Forms a ternary complex with ATXN1 mutant and phosphorylated RNA polymerase II. Interacts (via C-terminus) with TXNL4A and CD2BP2. Interacts (via WW domain) with ATN1 and SF3B1, and may interact with additional splice factors. Interacts (via WW domain) with WBP11; Leading to reduce interaction between PQBP1 and TXNL4A. Interacts with CAPRIN1. Interacts with DDX1. Interacts with SFPQ. Interacts with KHSRP.

Its subcellular location is the nucleus. It is found in the nucleus speckle. The protein resides in the cytoplasmic granule. Its function is as follows. Intrinsically disordered protein that acts as a scaffold, and which is involved in different processes, such as pre-mRNA splicing, transcription regulation, innate immunity and neuron development. Interacts with splicing-related factors via the intrinsically disordered region and regulates alternative splicing of target pre-mRNA species. May suppress the ability of POU3F2 to transactivate the DRD1 gene in a POU3F2 dependent manner. Can activate transcription directly or via association with the transcription machinery. May be involved in ATXN1 mutant-induced cell death. The interaction with ATXN1 mutant reduces levels of phosphorylated RNA polymerase II large subunit. Involved in the assembly of cytoplasmic stress granule, possibly by participating in the transport of neuronal RNA granules. Also acts as an innate immune sensor of infection by retroviruses, by detecting the presence of reverse-transcribed DNA in the cytosol. Directly binds retroviral reverse-transcribed DNA in the cytosol and interacts with CGAS, leading to activate the cGAS-STING signaling pathway, triggering type-I interferon production. This Pongo pygmaeus (Bornean orangutan) protein is Polyglutamine-binding protein 1 (PQBP1).